The primary structure comprises 242 residues: MAKRGKRYQQLLSLIEKGRLYSPKEAVSLVKKLATAKFDETINLAVRLGVDPRHADQQVRGTVVLPYGTGKEKKVLVFAEGEKAQEAREAGADYVGGEDLVKQIESGWLDFDVAIATPDIMGTLKIPSRLGKILGPRGLMPNPKTGTVTNDIAKAVKEYKAGRVEFRTDRYGIVHVPIGKASFSEEALYKNLMTVLGTLLRLKPAAAKGQYFKSIYISPSMGPSVPIDTKNIADLVKQEEAA.

This sequence belongs to the universal ribosomal protein uL1 family. As to quaternary structure, part of the 50S ribosomal subunit.

Functionally, binds directly to 23S rRNA. The L1 stalk is quite mobile in the ribosome, and is involved in E site tRNA release. Protein L1 is also a translational repressor protein, it controls the translation of the L11 operon by binding to its mRNA. This chain is Large ribosomal subunit protein uL1, found in Dictyoglomus turgidum (strain DSM 6724 / Z-1310).